A 321-amino-acid polypeptide reads, in one-letter code: Polyprenyl transferase cle5 (321 aa).

Transmembrane regions (helical) follow at residues 26–46 (PLLA…HKIT), 57–77 (VLSQ…AGMV), 107–127 (EALV…SWML), 132–149 (VQAA…YPFA), 159–179 (IYPQ…GTLA), 189–209 (LWAS…WTLY), 232–252 (VLAG…VLGA), 262–282 (SQWL…GQLV), and 300–320 (FALG…GGNG).

This sequence belongs to the UbiA prenyltransferase family. Mg(2+) is required as a cofactor.

The protein localises to the membrane. The protein operates within secondary metabolite biosynthesis; terpenoid biosynthesis. Functionally, polyprenyl transferase; part of the cluster A that mediates the biosynthesis of chevalone E and its oxidized derivatives that possess a unique five-membered lactone ring and can synergistically enhance the cytotoxicity of doxorubicin (DOX) in breast cancer cells. Within the pathway, cle5 takes part to the biosynthesis of the molecular scaffold by catalyzing the C-3 geranylgeranylation reaction of triacetic acid lactone (TAL) produced by cle1. The molecular scaffold is commonly biosynthesized by a series of enzymes including the non-reducing polyketide synthase (NR-PKS) cle1 that produces the alpha-pyrone triacetic acid lactone (TAL); The membrane-bound prenyltransferase cle5 that accepts TAL as its substrate to perform a C-3 geranylgeranylation reaction, in which the pathway-dedicated GGPS cle6 is required to provide GGPP, the other substrate of cle5; the FAD-dependent monooxygenase Cle3 that forms an (S)-epoxide ring at the terminal olefin of the geranylgeranyl group; and the terpene cyclase Cle7 that catalyzes the cyclization of the prenyl group that yields the pentacyclic pathway intermediate chevalone E. Chevalone E can derivatize into seven new oxidized analogs by the cytochrome P450 monooxygenases cle2 (acting at C-20) and cle4 (acting at C-11 and C-12). The sequence is that of Polyprenyl transferase cle5 from Aspergillus versicolor.